Here is a 381-residue protein sequence, read N- to C-terminus: Queuine tRNA-ribosyltransferase (381 aa).

Residue Asp-103 is the Proton acceptor of the active site. Residues 103-107 (DSGGF), Asp-157, Gln-200, and Gly-227 contribute to the substrate site. Residues 258 to 264 (GVGTYRE) form an RNA binding region. Asp-277 serves as the catalytic Nucleophile. The segment at 282–286 (TRLAR) is RNA binding; important for wobble base 34 recognition. Cys-315, Cys-317, Cys-320, and His-346 together coordinate Zn(2+).

Belongs to the queuine tRNA-ribosyltransferase family. As to quaternary structure, homodimer. Within each dimer, one monomer is responsible for RNA recognition and catalysis, while the other monomer binds to the replacement base PreQ1. The cofactor is Zn(2+).

The enzyme catalyses 7-aminomethyl-7-carbaguanine + guanosine(34) in tRNA = 7-aminomethyl-7-carbaguanosine(34) in tRNA + guanine. Its pathway is tRNA modification; tRNA-queuosine biosynthesis. Functionally, catalyzes the base-exchange of a guanine (G) residue with the queuine precursor 7-aminomethyl-7-deazaguanine (PreQ1) at position 34 (anticodon wobble position) in tRNAs with GU(N) anticodons (tRNA-Asp, -Asn, -His and -Tyr). Catalysis occurs through a double-displacement mechanism. The nucleophile active site attacks the C1' of nucleotide 34 to detach the guanine base from the RNA, forming a covalent enzyme-RNA intermediate. The proton acceptor active site deprotonates the incoming PreQ1, allowing a nucleophilic attack on the C1' of the ribose to form the product. After dissociation, two additional enzymatic reactions on the tRNA convert PreQ1 to queuine (Q), resulting in the hypermodified nucleoside queuosine (7-(((4,5-cis-dihydroxy-2-cyclopenten-1-yl)amino)methyl)-7-deazaguanosine). In Cyanothece sp. (strain PCC 7425 / ATCC 29141), this protein is Queuine tRNA-ribosyltransferase.